The sequence spans 466 residues: IQ domain-containing protein C (466 aa).

An IQ domain is found at 6–35 (LVRKVSALQACVRGFLVRRQFQSLRAEYEA). Disordered stretches follow at residues 105 to 157 (KSGE…PHSQ), 214 to 233 (EQAC…DQSY), 238 to 310 (TGEL…QTFG), and 394 to 466 (VLDL…EPPG). Basic and acidic residues predominate over residues 132–153 (PSQEKTRDTTRMENPEATDQRL). A compositionally biased stretch (polar residues) spans 282–293 (GPPSSIPSNSQA). A compositionally biased stretch (basic and acidic residues) spans 297–306 (RLTKGPDDGR). Ser438 is subject to Phosphoserine.

This is IQ domain-containing protein C (IQCC) from Homo sapiens (Human).